Reading from the N-terminus, the 182-residue chain is Fucoxanthin-chlorophyll a-c binding protein D, chloroplastic (182 aa).

Residues 1–4 (AMKM) constitute a chloroplast transit peptide. Transmembrane regions (helical) follow at residues 46-66 (IAML…PGML), 87-107 (IPPG…LAVM), and 148-168 (GRAA…NNKP).

Belongs to the fucoxanthin chlorophyll protein family. The LHC complex of chromophytic algae is composed of fucoxanthin, chlorophyll A and C bound non-covalently by fucoxanthin chlorophyll proteins (FCPs). The ratio of pigments in this LHC is; fucoxanthin: chlorophyll C: chlorophyll A; (0.6-1): (0.1-0.3): (1).

The protein resides in the plastid. The protein localises to the chloroplast thylakoid membrane. In terms of biological role, the light-harvesting complex (LHC) functions as a light receptor, it captures and delivers excitation energy to photosystems with which it is closely associated. Energy is transferred from the carotenoid and chlorophyll C (or B) to chlorophyll A and the photosynthetic reaction centers where it is used to synthesize ATP and reducing power. The polypeptide is Fucoxanthin-chlorophyll a-c binding protein D, chloroplastic (FCPD) (Macrocystis pyrifera (Giant kelp)).